A 260-amino-acid polypeptide reads, in one-letter code: Malonyl-[acyl-carrier protein] O-methyltransferase (260 aa).

This sequence belongs to the methyltransferase superfamily.

It catalyses the reaction malonyl-[ACP] + S-adenosyl-L-methionine = malonyl-[ACP] methyl ester + S-adenosyl-L-homocysteine. The protein operates within cofactor biosynthesis; biotin biosynthesis. In terms of biological role, converts the free carboxyl group of a malonyl-thioester to its methyl ester by transfer of a methyl group from S-adenosyl-L-methionine (SAM). It allows to synthesize pimeloyl-ACP via the fatty acid synthetic pathway. The chain is Malonyl-[acyl-carrier protein] O-methyltransferase from Chlorobium phaeovibrioides (strain DSM 265 / 1930) (Prosthecochloris vibrioformis (strain DSM 265)).